A 359-amino-acid polypeptide reads, in one-letter code: Phosphoserine aminotransferase (359 aa).

Residue R42 participates in L-glutamate binding. Pyridoxal 5'-phosphate-binding positions include 76 to 77 (AS), W102, T152, D171, and Q194. K195 bears the N6-(pyridoxal phosphate)lysine mark. 236-237 (NT) lines the pyridoxal 5'-phosphate pocket.

The protein belongs to the class-V pyridoxal-phosphate-dependent aminotransferase family. SerC subfamily. As to quaternary structure, homodimer. Pyridoxal 5'-phosphate serves as cofactor.

Its subcellular location is the cytoplasm. The enzyme catalyses O-phospho-L-serine + 2-oxoglutarate = 3-phosphooxypyruvate + L-glutamate. It carries out the reaction 4-(phosphooxy)-L-threonine + 2-oxoglutarate = (R)-3-hydroxy-2-oxo-4-phosphooxybutanoate + L-glutamate. It functions in the pathway amino-acid biosynthesis; L-serine biosynthesis; L-serine from 3-phospho-D-glycerate: step 2/3. Its pathway is cofactor biosynthesis; pyridoxine 5'-phosphate biosynthesis; pyridoxine 5'-phosphate from D-erythrose 4-phosphate: step 3/5. In terms of biological role, catalyzes the reversible conversion of 3-phosphohydroxypyruvate to phosphoserine and of 3-hydroxy-2-oxo-4-phosphonooxybutanoate to phosphohydroxythreonine. The polypeptide is Phosphoserine aminotransferase (Vesicomyosocius okutanii subsp. Calyptogena okutanii (strain HA)).